The chain runs to 290 residues: Probable aquaporin PIP2-7 (290 aa).

The next 2 helical transmembrane spans lie at 45–65 (ALIAEFMATLIFLYVSIATVI) and 79–99 (GVGYLGVAWSFGATIFVLVYC). Positions 109–111 (NPA) match the NPA 1 motif. A run of 3 helical transmembrane segments spans residues 128-148 (VLYVVAQCLGAIAGAGIVKGI), 168-188 (SAAGALGAEIVGTFILVYTVF), and 202-222 (IPVLVPLPIGFAVFVVHLATI). Positions 230–232 (NPA) match the NPA 2 motif. A helical transmembrane segment spans residues 252–272 (IFWVGPVIGAFLAAAYHKLVL).

It belongs to the MIP/aquaporin (TC 1.A.8) family. PIP (TC 1.A.8.11) subfamily. Expressed in roots.

The protein localises to the cell membrane. Aquaporins facilitate the transport of water and small neutral solutes across cell membranes. In Oryza sativa subsp. japonica (Rice), this protein is Probable aquaporin PIP2-7 (PIP2-7).